Here is a 413-residue protein sequence, read N- to C-terminus: Palmitoyltransferase ZDHHC6 (413 aa).

Residues 1 to 24 (MGIFCSVIKFENLQDLRRLCHWGP) are Cytoplasmic-facing. The chain crosses the membrane as a helical span at residues 25–45 (IIALGVIAICSTMAMIDSVLW). Over 46-57 (YWPLHTTGGSVN) the chain is Lumenal. A helical transmembrane segment spans residues 58–78 (FIMLINWTVMILYNYFNAMFA). Over 79–143 (GPGFVPRGWK…NCCGHQNHAS (65 aa)) the chain is Cytoplasmic. The region spanning 99–149 (QYCKVCQAYKAPRSHHCRKCNRCVMKMDHHCPWINNCCGHQNHASFTLFLL) is the DHHC domain. Catalysis depends on C129, which acts as the S-palmitoyl cysteine intermediate. Residues 144–164 (FTLFLLLAPLGCTHAAFIFVM) form a helical membrane-spanning segment. Residues 165 to 194 (TMYTQLYNRLSFGWNTVKIDMSAARRDPPP) lie on the Lumenal side of the membrane. The helical transmembrane segment at 195 to 215 (IVPFGLAAFAATLFALGLALG) threads the bilayer. The Cytoplasmic portion of the chain corresponds to 216–413 (TTIAVGMLFF…PAPEGEKKNR (198 aa)). The 86-residue stretch at 313 to 398 (VRSVRYKVIE…PRNCVEKCPC (86 aa)) folds into the SH3 domain. Residues C328, C329, and C343 are each lipidated (S-palmitoyl cysteine). The Di-lysine motif signature appears at 410 to 413 (KKNR).

Belongs to the DHHC palmitoyltransferase family. Homooligomerizes. Interacts with SELENOK. In terms of processing, palmitoylated at 3 different sites by ZDHHC16. The combination of the different palmitoylation events strongly affects the quaternary assembly of ZDHHC6, its localization, stability and function. Palmitoylation at Cys-328 accelerates the turnover of ZDHHC6. Depalmitoylated by LYPLA2.

Its subcellular location is the endoplasmic reticulum membrane. The enzyme catalyses L-cysteinyl-[protein] + hexadecanoyl-CoA = S-hexadecanoyl-L-cysteinyl-[protein] + CoA. It catalyses the reaction L-cysteinyl-[protein] + octadecanoyl-CoA = S-octadecanoyl-L-cysteinyl-[protein] + CoA. Functionally, endoplasmic reticulum palmitoyl acyltransferase that mediates palmitoylation of proteins such as AMFR, CALX, ITPR1 and TFRC. Palmitoylates calnexin (CALX), which is required for its association with the ribosome-translocon complex and efficient folding of glycosylated proteins. Mediates palmitoylation of AMFR, promoting AMFR distribution to the peripheral endoplasmic reticulum. Together with SELENOK, palmitoylates ITPR1 in immune cells, leading to regulate ITPR1 stability and function. Stearoyltransferase that mediates stearoylation of TFRC to inhibit TFRC-mediated activation of the JNK pathway and mitochondrial fragmentation. This chain is Palmitoyltransferase ZDHHC6, found in Mus musculus (Mouse).